The chain runs to 799 residues: Lon protease (799 aa).

The 194-residue stretch at 7–200 (LPVLPLRDIV…KVFALMEGEI (194 aa)) folds into the Lon N-terminal domain. 352-359 (GPPGVGKT) lines the ATP pocket. The Lon proteolytic domain occupies 587-768 (VDQVGIVTGL…DEVLKHALTG (182 aa)). Catalysis depends on residues Ser674 and Lys717. A disordered region spans residues 772–799 (PVEWNEAEEPITTSAKKDDGDSDAMLTH).

This sequence belongs to the peptidase S16 family. As to quaternary structure, homohexamer. Organized in a ring with a central cavity.

The protein resides in the cytoplasm. The enzyme catalyses Hydrolysis of proteins in presence of ATP.. ATP-dependent serine protease that mediates the selective degradation of mutant and abnormal proteins as well as certain short-lived regulatory proteins. Required for cellular homeostasis and for survival from DNA damage and developmental changes induced by stress. Degrades polypeptides processively to yield small peptide fragments that are 5 to 10 amino acids long. Binds to DNA in a double-stranded, site-specific manner. CcrM is an important target of the Lon protease pathway in C.crescentus. The protein is Lon protease of Caulobacter vibrioides (strain ATCC 19089 / CIP 103742 / CB 15) (Caulobacter crescentus).